The sequence spans 167 residues: Fluoride-specific ion channel FluC (167 aa).

A run of 4 helical transmembrane segments spans residues 32 to 52, 69 to 89, 102 to 122, and 137 to 157; these read HVTPIYTIAAISLGASLGALA, IGTLAANLIAAYVVGVTIAYV, FMITGLAGGLSTFSTFTAELF, and LGLHVGGSLALLMLGMLTIGL. Residues Gly109 and Ser112 each coordinate Na(+).

The protein belongs to the fluoride channel Fluc/FEX (TC 1.A.43) family.

Its subcellular location is the cell inner membrane. The catalysed reaction is fluoride(in) = fluoride(out). Na(+) is not transported, but it plays an essential structural role and its presence is essential for fluoride channel function. Its function is as follows. Fluoride-specific ion channel. Important for reducing fluoride concentration in the cell, thus reducing its toxicity. This Xanthomonas oryzae pv. oryzae (strain KACC10331 / KXO85) protein is Fluoride-specific ion channel FluC.